Reading from the N-terminus, the 101-residue chain is uncharacterized protein (101 aa).

The first 23 residues, 1–23, serve as a signal peptide directing secretion; the sequence is MERRTGVVLIIFVTFCEAMMARA. The chain crosses the membrane as a helical span at residues 38 to 58; it reads FLLFIIHTSCTMVAFIIGNLA.

Its subcellular location is the host membrane. This is an uncharacterized protein from Cryphonectria parasitica (Chestnut blight fungus).